The following is a 227-amino-acid chain: ATP-dependent dethiobiotin synthetase BioD (227 aa).

12-17 provides a ligand contact to ATP; sequence DAGKTH. Residue T16 participates in Mg(2+) binding. K37 is an active-site residue. S41 provides a ligand contact to substrate. ATP contacts are provided by residues D54, 116-119, 176-177, and 205-207; these read EGAG, NQ, and PYS. Positions 54 and 116 each coordinate Mg(2+).

It belongs to the dethiobiotin synthetase family. As to quaternary structure, homodimer. It depends on Mg(2+) as a cofactor.

It localises to the cytoplasm. The catalysed reaction is (7R,8S)-7,8-diammoniononanoate + CO2 + ATP = (4R,5S)-dethiobiotin + ADP + phosphate + 3 H(+). It participates in cofactor biosynthesis; biotin biosynthesis; biotin from 7,8-diaminononanoate: step 1/2. Catalyzes a mechanistically unusual reaction, the ATP-dependent insertion of CO2 between the N7 and N8 nitrogen atoms of 7,8-diaminopelargonic acid (DAPA, also called 7,8-diammoniononanoate) to form a ureido ring. The protein is ATP-dependent dethiobiotin synthetase BioD of Pseudoalteromonas translucida (strain TAC 125).